A 210-amino-acid chain; its full sequence is Large ribosomal subunit protein uL3 (210 aa).

The segment at 133-152 (ATHGNSLSHRVHGSTGQNQT) is disordered. Glutamine 151 is subject to N5-methylglutamine.

This sequence belongs to the universal ribosomal protein uL3 family. In terms of assembly, part of the 50S ribosomal subunit. Forms a cluster with proteins L14 and L19. Methylated by PrmB.

One of the primary rRNA binding proteins, it binds directly near the 3'-end of the 23S rRNA, where it nucleates assembly of the 50S subunit. The protein is Large ribosomal subunit protein uL3 of Francisella tularensis subsp. holarctica (strain FTNF002-00 / FTA).